We begin with the raw amino-acid sequence, 421 residues long: 3-isopropylmalate dehydratase large subunit (421 aa).

[4Fe-4S] cluster-binding residues include C302, C362, and C365.

The protein belongs to the aconitase/IPM isomerase family. LeuC type 2 subfamily. Heterodimer of LeuC and LeuD. The cofactor is [4Fe-4S] cluster.

It carries out the reaction (2R,3S)-3-isopropylmalate = (2S)-2-isopropylmalate. Its pathway is amino-acid biosynthesis; L-leucine biosynthesis; L-leucine from 3-methyl-2-oxobutanoate: step 2/4. Catalyzes the isomerization between 2-isopropylmalate and 3-isopropylmalate, via the formation of 2-isopropylmaleate. This is 3-isopropylmalate dehydratase large subunit from Campylobacter curvus (strain 525.92).